The following is a 36-amino-acid chain: Egg-laying-like hormone (36 aa).

At K36 the chain carries Lysine amide.

Supra, subesophageal ganglia and segmental ganglia of the ventral nerve cord and brain.

May be involved in leech reproduction. In Theromyzon tessulatum (Duck leech), this protein is Egg-laying-like hormone.